The primary structure comprises 144 residues: Large ribosomal subunit protein uL15 (144 aa).

The interval 1 to 57 (MLLNTLSPAAGSKHAPKRLGRGVGSGLGKTGGRGHKGQKSRSGGKVRPGFEGGQMPL) is disordered. Over residues 21-31 (RGVGSGLGKTG) the composition is skewed to gly residues. A compositionally biased stretch (basic residues) spans 32–44 (GRGHKGQKSRSGG).

Belongs to the universal ribosomal protein uL15 family. As to quaternary structure, part of the 50S ribosomal subunit.

Functionally, binds to the 23S rRNA. This is Large ribosomal subunit protein uL15 from Vibrio cholerae serotype O1 (strain ATCC 39315 / El Tor Inaba N16961).